The primary structure comprises 1637 residues: Acrosomal protein KIAA1210 (1637 aa).

Disordered stretches follow at residues arginine 44–serine 121, arginine 141–tryptophan 293, proline 341–aspartate 404, valine 438–glutamate 759, proline 865–threonine 896, serine 935–leucine 975, leucine 1017–glutamine 1057, phenylalanine 1090–alanine 1137, serine 1182–phenylalanine 1238, and asparagine 1539–serine 1558. Basic residues predominate over residues histidine 103–arginine 114. Residues arginine 141–threonine 156 are compositionally biased toward low complexity. A compositionally biased stretch (polar residues) spans serine 170–leucine 190. Residues alanine 229–serine 249 show a composition bias toward basic and acidic residues. Over residues threonine 250–threonine 261 the composition is skewed to low complexity. The segment covering proline 341–lysine 353 has biased composition (polar residues). Residues proline 355 to lysine 374 show a composition bias toward basic and acidic residues. Low complexity predominate over residues threonine 508–glutamate 526. Positions alanine 550–asparagine 572 are enriched in acidic residues. The segment covering aspartate 689–glutamine 698 has biased composition (low complexity). Composition is skewed to polar residues over residues serine 745 to glutamate 759, glycine 879 to threonine 896, serine 935 to alanine 956, serine 964 to leucine 975, and leucine 1017 to valine 1030.

Interacts with TOP2B. In terms of tissue distribution, predominantly expressed in testis (at protein level).

Its subcellular location is the cytoplasmic vesicle. The protein localises to the secretory vesicle. The protein resides in the acrosome. This chain is Acrosomal protein KIAA1210, found in Mus musculus (Mouse).